Consider the following 526-residue polypeptide: MEATLPVCKSVTSTPGLFMKRNSGIRNSQCSFMVGTKVNFPRQRTQATQANHCAKKNGGALGVTCRAEKILVANRGEIAVRVIRTAHELGIPCVAVYSTIDKDALHVKLADESVCIGEAPSNQSYLVIQNVLSAAISRGCTMLHPGYGFLAENAVFVEMCREHGINFIGPNPDSIRVMGDKSTARETMKKANVPTVPGSDGLLQSTEEAVKLASEIGYPVMIKATAGGGGRGMRLAKEPDEFVKLLQQAKSEAAAAFGNDGVYLEKYVQNPRHIEFQVLADKFGNVVHFGERDCSIQRRNQKLLEEAPSPALTPELRKAMGDAAVAAAASIGYIGVGTVEFLLDERGSFYFMEMNTRIQVEHPVTEMISSVDLIEEQIRVAMGEKIQYKQEDIVLRGHSIECRINAEDAFKGFRPGPGRITAYLPSGGPFVRMDSHVYPDYVVPPSYDSLLGKLIVWAPTREKAIERMKRALDDTIITGVPTTIDYHKLILDIEDFKNGNVDTAFIPKHEQELAAPQQIILANSAS.

A chloroplast-targeting transit peptide spans 1–71; that stretch reads MEATLPVCKS…GVTCRAEKIL (71 aa). Residues K181, 213–274, K223, 229–230, 265–268, and H273 contribute to the ATP site; these read ASEI…PRHI, GG, and EKYV. The ATP-grasp domain occupies 185 to 382; it reads RETMKKANVP…LIEEQIRVAM (198 aa). Hydrogencarbonate is bound at residue K302. The ATP site is built by E340 and E353. The Mg(2+) site is built by E340, E353, and N355. Mn(2+)-binding residues include E340, E353, and N355. Residues R357, V360, and R403 each contribute to the hydrogencarbonate site. The active site involves R357. Residue R403 coordinates biotin.

Acetyl-CoA carboxylase is a heterohexamer composed of biotin carboxyl carrier protein, biotin carboxylase and two subunits each of ACCase subunit alpha and ACCase plastid-coded subunit beta (accD). The cofactor is Mg(2+). It depends on Mn(2+) as a cofactor.

The protein localises to the plastid. It is found in the chloroplast. It carries out the reaction N(6)-biotinyl-L-lysyl-[protein] + hydrogencarbonate + ATP = N(6)-carboxybiotinyl-L-lysyl-[protein] + ADP + phosphate + H(+). The protein operates within lipid metabolism; malonyl-CoA biosynthesis; malonyl-CoA from acetyl-CoA: step 1/1. Its function is as follows. This protein is a component of the acetyl coenzyme A carboxylase complex; first, biotin carboxylase catalyzes the carboxylation of the carrier protein and then the transcarboxylase transfers the carboxyl group to form malonyl-CoA. This chain is Biotin carboxylase 2, chloroplastic, found in Populus trichocarpa (Western balsam poplar).